Consider the following 42-residue polypeptide: Photosystem I reaction center subunit IX (42 aa).

A helical membrane pass occupies residues 7–27 (YLSVAPVLSTLWFGSLAGLLI).

It belongs to the PsaJ family.

Its subcellular location is the plastid. It localises to the chloroplast thylakoid membrane. May help in the organization of the PsaE and PsaF subunits. The chain is Photosystem I reaction center subunit IX from Daucus carota (Wild carrot).